A 1865-amino-acid chain; its full sequence is Dedicator of cytokinesis protein 1 (1865 aa).

Residues 9–70 form the SH3 domain; sequence REEKYGVAFY…PASYIHLKEA (62 aa). One can recognise a C2 DOCK-type domain in the interval 425-609; the sequence is RNDIYVTLVQ…DSFQISTLVC (185 aa). Positions 1207 to 1617 constitute a DOCKER domain; that stretch reads YKEIEREEMY…VEKQYGVRTM (411 aa). A disordered region spans residues 1613-1723; that stretch reads GVRTMPSGLD…FKPADSSLQQ (111 aa). A compositionally biased stretch (low complexity) spans 1639-1664; that stretch reads PSSSRPLSVASVSSFSSDSTPSRPGS. A compositionally biased stretch (basic and acidic residues) spans 1680 to 1694; it reads RSQDKLDKDDPDKEK. Ser1681 carries the post-translational modification Phosphoserine. The interval 1687–1695 is phosphoinositide-binding; sequence KDDPDKEKK. The segment covering 1695–1704 has biased composition (basic residues); that stretch reads KDKKKEKRNS. A compositionally biased stretch (basic and acidic residues) spans 1705-1716; the sequence is KHQEIFDKEFKP. Phosphoserine is present on residues Ser1743, Ser1756, Ser1761, and Ser1764. 2 disordered regions span residues 1753-1778 and 1801-1865; these read RRFS…AKLS and PLPL…GIVQ. Low complexity predominate over residues 1756–1766; that stretch reads SVSPASPSSQQ. A phosphothreonine mark is found at Thr1767 and Thr1772. Positions 1793 to 1819 are interaction with NCK2 second and third SH3 domain (minor); that stretch reads MDVADVPPPLPLKGNMADYGNLMENQD. The SH3-binding; interaction with CRK motif lies at 1799–1805; it reads PPPLPLK. An interaction with NCK2 third SH3 domain (major) region spans residues 1820–1836; it reads MMVSPTSPPPPPPQRQQ. Pro residues predominate over residues 1825–1851; it reads TSPPPPPPQRQQPPPLPSKTPPPPPPK. The interaction with NCK2 (minor) stretch occupies residues 1837-1852; that stretch reads PPPLPSKTPPPPPPKT. The SH3-binding; interaction with CRK motif lies at 1838–1843; that stretch reads PPLPSK. Position 1858 is a phosphoserine (Ser1858).

The protein belongs to the DOCK family. In terms of assembly, interacts with the SH3 domains of CRK and NCK2 via multiple sites. Interacts with nucleotide-free RAC1 via its DOCKER domain. Interacts with ELMO1, ELMO2 and probably ELMO3 via its SH3 domain. Interacts with RAC1. Interacts with ELMO1 and ADGRB1. Identified in a complex with AUTS2 and ELMO2.

Its subcellular location is the cytoplasm. It localises to the membrane. Functionally, involved in cytoskeletal rearrangements required for phagocytosis of apoptotic cells and cell motility. Along with DOCK1, mediates CRK/CRKL regulation of epithelial and endothelial cell spreading and migration on type IV collagen. Functions as a guanine nucleotide exchange factor (GEF), which activates Rac Rho small GTPases by exchanging bound GDP for free GTP. Its GEF activity may be enhanced by ELMO1. The polypeptide is Dedicator of cytokinesis protein 1 (Dock1) (Mus musculus (Mouse)).